The primary structure comprises 55 residues: SIPPACDKYSRLPGCPRDYSPVCGTDGKTYPNECVLCLSNSEENKNVQIYKSGMC.

One can recognise a Kazal-like domain in the interval Ser-1 to Cys-55. 3 disulfide bridges follow: Cys-6/Cys-37, Cys-15/Cys-34, and Cys-23/Cys-55.

Its subcellular location is the secreted. Inhibits trypsin and plasmin. In Gallus gallus (Chicken), this protein is Trypsin inhibitor ClTI-1.